Reading from the N-terminus, the 147-residue chain is Large ribosomal subunit protein uL22 (147 aa).

Belongs to the universal ribosomal protein uL22 family. Part of the 50S ribosomal subunit.

In terms of biological role, this protein binds specifically to 23S rRNA; its binding is stimulated by other ribosomal proteins, e.g. L4, L17, and L20. It is important during the early stages of 50S assembly. It makes multiple contacts with different domains of the 23S rRNA in the assembled 50S subunit and ribosome. The globular domain of the protein is located near the polypeptide exit tunnel on the outside of the subunit, while an extended beta-hairpin is found that lines the wall of the exit tunnel in the center of the 70S ribosome. This chain is Large ribosomal subunit protein uL22, found in Fervidobacterium nodosum (strain ATCC 35602 / DSM 5306 / Rt17-B1).